Here is a 335-residue protein sequence, read N- to C-terminus: Tetraacyldisaccharide 4'-kinase (335 aa).

Position 51-58 (51-58) interacts with ATP; the sequence is HVGGAGKT.

The protein belongs to the LpxK family.

It carries out the reaction a lipid A disaccharide + ATP = a lipid IVA + ADP + H(+). It participates in glycolipid biosynthesis; lipid IV(A) biosynthesis; lipid IV(A) from (3R)-3-hydroxytetradecanoyl-[acyl-carrier-protein] and UDP-N-acetyl-alpha-D-glucosamine: step 6/6. Functionally, transfers the gamma-phosphate of ATP to the 4'-position of a tetraacyldisaccharide 1-phosphate intermediate (termed DS-1-P) to form tetraacyldisaccharide 1,4'-bis-phosphate (lipid IVA). In Nitrobacter hamburgensis (strain DSM 10229 / NCIMB 13809 / X14), this protein is Tetraacyldisaccharide 4'-kinase.